The primary structure comprises 1760 residues: MAAPAQAVVKEKPPIHVYPQAKIGTKIFTHHGIHSMRYNGVCALTGSTVLMASGRFVMFVDVHKGTIESMQGPENGGVGAVAVHPSRQYYVVCERKPSDPAIRAYSWPSRTEVGEFVKGATKGFSACAFNKDGSMMATVGMYPDFFLTVWDWESRGMVLRSKCHNTDVYTVLFSPFDSGLLVSGGAGHIKFWTMANTFTGLKLQGLLGKFGRLEISNVSGFVVLSDGKVISGSESGLIILWEGDLIRCCFAREVDREDDDGTAATFMARSYDYTPCHEGAINVVELMEGGRVLMTAGDDGYFRFWRVSELEVAEGEGAPPLYVPECLGEILVHAGAFIRSVTYCKDVDEWVVLDSAGVLWRVPYVHPDDILNNAVTKPKEQAVPALEFNGGSITSAALSPIDHTVVTGGEDGTIRLVDYVTPRELYKMCLPQPNVVIGLRFFQKDPEKKKFLACCKSGAVLLVKRGSTAFTLLGQWRPHNDGLALFAVDAAEHRLCTIAHGTVFFFTILDDFSSLEPIGFCKIPLPGATCVAWDDASSCCLIGFECGKLLAIRAPTRDMVDQSVSYEFTCNYALVGIRQRKKVEKKQANVSAGEREGFVEEEEEEEYLGPWPVRLICPMADGDFAIGAGGVELLYKYGLHVRYEGQKELPPLPPTGIEPPDYVEEPLMNLCYRDYTPEASSMSYSGRYLVVICEGSQMLLRQLDEMGRVRLEPILVASAHDRLDGPIAAACTSFDDKMLVSVGSDGLVVAQLLDGCIAPQPPSPVAQLQPLRAEEIVEPQLAPFSITEQKDLDDRRRAEDEKRRELNLFLDKLKDVHQKYARLLRENQSLALTHRLSKEEITIHPQIYRELQEEMRQRVEESRKPTALELARENIRTRKMRNRFVDNLAHDRFLVRSFSKEFSVASFRTPYVDGSIKLFQQQIDELLGSERCSSLACDGDRGIVSVASGEASQQSPRNLSLSTAAGVVRWLNSEERKRNEGEQQKMNAAHREAEILTTTMRQYLNKMDERREERHWRKKGYEMLLAHKPDPAVEEASLNEELRRETRRRGECILRTDPSYHSAPSAVIKLQQLIRLEEIIFNMRNNFSNELLKLRDEKERLCGTLNVSLQRIRAINEKLKDKSFHADDVKLTPEEMPGKRFEISRDGLVAFMKQRQEEKLREQTAKKAQRGFGADLATGEPATNTDTSGADTPATRRSEGEDSRKVTISANRDSFGTAAARTRSVRTGTLAASKGGRPFSGGGFAAGAARERMNHELRVKHENIKLTEMEEEELQIERNRLLAERQRLHTQVQAMMDEFDVRLWSMYEERSRVDANLCLAHTHSLLLFREYNILLVFRQKDFELQSSYDEARNSRDRCLREMEELQRLVQDQTASIEKLQEANKVFRREVEIFISNSFPAEHVPYITKVFLRQIKRRKHHSDMSGNDDDITSDDDDDDDMGEDEAWEEICPPNCSEERWCEVIEKREVRLDYVDAITEERRQLEATEQRIEEHKALADKNNAAVSTCLKAIEDFQGEKRKQLNMLETLVAMRCGQVRCLDEEGRCPDTFRRNDLVVVSDKVITGLHDRIRALAEEKHDRRGKLKSMVAEQQALQRERSEKQALHTQWEEKIYEAMLLKFGQIVNLEVLESSCGSREVEQLKERLRLEELSWEKELRKRDKKIAVLREKLHESLEYNTSLLQTIGDQESDRQSVERSLAQSTQKVVSKMYDSINVATEEDRSNLRLLIAAQQEEIDALRTEVALLRTKGGHVYAAAMAAGR.

5 WD repeats span residues 119 to 160 (GATK…MVLR), 163 to 202 (CHNTDVYTVLFSPFDSGLLVSGGAGHIKFWTMANTFTGLK), 213 to 251 (LEISNVSGFVVLSDGKVISGSESGLIILWEGDLIRCCFA), 276 to 315 (CHEGAINVVELMEGGRVLMTAGDDGYFRFWRVSELEVAEG), and 388 to 427 (FNGGSITSAALSPIDHTVVTGGEDGTIRLVDYVTPRELYK). Over residues 1155 to 1165 (RQEEKLREQTA) the composition is skewed to basic and acidic residues. Positions 1155-1224 (RQEEKLREQT…FGTAAARTRS (70 aa)) are disordered. The span at 1181–1190 (PATNTDTSGA) shows a compositional bias: polar residues. Positions 1194–1205 (ATRRSEGEDSRK) are enriched in basic and acidic residues. A coiled-coil region spans residues 1348 to 1389 (YDEARNSRDRCLREMEELQRLVQDQTASIEKLQEANKVFRRE). The disordered stretch occupies residues 1420–1444 (HSDMSGNDDDITSDDDDDDDMGEDE). Residues 1425 to 1444 (GNDDDITSDDDDDDDMGEDE) show a composition bias toward acidic residues.

This sequence belongs to the CFAP44 family.

It is found in the cell projection. The protein localises to the cilium. The protein resides in the flagellum. It localises to the cytoplasm. Its subcellular location is the cytoskeleton. It is found in the flagellum axoneme. Functionally, flagellar protein involved in flagellum axoneme organization and function. The chain is Cilia- and flagella-associated protein 44 from Trypanosoma brucei brucei (strain 927/4 GUTat10.1).